The following is a 171-amino-acid chain: O-acetyl-ADP-ribose deacetylase 2 (171 aa).

Residues 1-171 (MNKITVIQGD…NYDLYLKLLN (171 aa)) enclose the Macro domain. Residues 10 to 11 (DI), Asn24, 32 to 34 (GVD), and 121 to 125 (STGIY) each bind substrate. Residue Asp34 is the Proton acceptor of the active site.

The protein belongs to the MacroD-type family. YmdB subfamily. As to quaternary structure, homodimer. Interacts with RNase III.

It carries out the reaction 3''-O-acetyl-ADP-D-ribose + H2O = ADP-D-ribose + acetate + H(+). The catalysed reaction is 2''-O-acetyl-ADP-D-ribose + H2O = ADP-D-ribose + acetate + H(+). Deacetylates O-acetyl-ADP ribose to yield ADP-ribose and free acetate. Down-regulates ribonuclease 3 (RNase III) activity. Acts by interacting directly with the region of the ribonuclease that is required for dimerization/activation. This chain is O-acetyl-ADP-ribose deacetylase 2, found in Pantoea vagans (strain C9-1) (Pantoea agglomerans (strain C9-1)).